A 143-amino-acid chain; its full sequence is Heat shock protein 16 (143 aa).

A sHSP domain is found at 30–143 (QIPGELSPSI…SQTKKQIAIK (114 aa)).

The protein belongs to the small heat shock protein (HSP20) family.

It is found in the cytoplasm. Its subcellular location is the nucleus. The polypeptide is Heat shock protein 16 (hsp16) (Schizosaccharomyces pombe (strain 972 / ATCC 24843) (Fission yeast)).